The following is an 81-amino-acid chain: MVKIRLKRLGTKKRPYYRIVVQDVREPRNGKTIDEVGIYHPIETAEKQISFDADKVRNWLGKGAQPTDTVRRLLNKKEFTL.

Belongs to the bacterial ribosomal protein bS16 family.

This Treponema denticola (strain ATCC 35405 / DSM 14222 / CIP 103919 / JCM 8153 / KCTC 15104) protein is Small ribosomal subunit protein bS16.